We begin with the raw amino-acid sequence, 260 residues long: Indole-3-glycerol phosphate synthase (260 aa).

The protein belongs to the TrpC family.

It catalyses the reaction 1-(2-carboxyphenylamino)-1-deoxy-D-ribulose 5-phosphate + H(+) = (1S,2R)-1-C-(indol-3-yl)glycerol 3-phosphate + CO2 + H2O. The protein operates within amino-acid biosynthesis; L-tryptophan biosynthesis; L-tryptophan from chorismate: step 4/5. The chain is Indole-3-glycerol phosphate synthase from Ruminiclostridium cellulolyticum (strain ATCC 35319 / DSM 5812 / JCM 6584 / H10) (Clostridium cellulolyticum).